We begin with the raw amino-acid sequence, 905 residues long: Nitrate reductase [NADPH] (905 aa).

The segment at 1–42 (METSTTTTLLQQERIPENSEPISTHIHTHSLPPTPPGTAKPS) is disordered. Cys-179 contacts Mo-molybdopterin. A Cytochrome b5 heme-binding domain is found at 546–621 (NRKITIEELK…LPTYHIGTLD (76 aa)). Heme contacts are provided by His-581 and His-604. One can recognise an FAD-binding FR-type domain in the interval 648 to 759 (KTWSKAILDK…KGPTGKFVYH (112 aa)). Residues 702–705 (RSYT), 719–723 (LIKIY), 733–735 (VMT), Ser-783, and Thr-786 contribute to the FAD site. Position 875–884 (875–884 (LLLVCGPPPM)) interacts with NADP(+).

It belongs to the nitrate reductase family. As to quaternary structure, homodimer. The cofactor is FAD. It depends on heme as a cofactor. Mo-molybdopterin is required as a cofactor.

The catalysed reaction is nitrite + NADP(+) + H2O = nitrate + NADPH + H(+). Its function is as follows. Nitrate reductase is a key enzyme involved in the first step of nitrate assimilation in plants, fungi and bacteria. The polypeptide is Nitrate reductase [NADPH] (NIA) (Fusarium oxysporum (Fusarium vascular wilt)).